The primary structure comprises 99 residues: NADH-quinone oxidoreductase subunit K (99 aa).

3 consecutive transmembrane segments (helical) span residues 3–23, 28–48, and 59–79; these read LVNY…TVLV, IIMF…FVAF, and VVAF…LAII.

It belongs to the complex I subunit 4L family. NDH-1 is composed of 14 different subunits. Subunits NuoA, H, J, K, L, M, N constitute the membrane sector of the complex.

It is found in the cell membrane. The enzyme catalyses a quinone + NADH + 5 H(+)(in) = a quinol + NAD(+) + 4 H(+)(out). NDH-1 shuttles electrons from NADH, via FMN and iron-sulfur (Fe-S) centers, to quinones in the respiratory chain. The immediate electron acceptor for the enzyme in this species is believed to be a menaquinone. Couples the redox reaction to proton translocation (for every two electrons transferred, four hydrogen ions are translocated across the cytoplasmic membrane), and thus conserves the redox energy in a proton gradient. In Beutenbergia cavernae (strain ATCC BAA-8 / DSM 12333 / CCUG 43141 / JCM 11478 / NBRC 16432 / NCIMB 13614 / HKI 0122), this protein is NADH-quinone oxidoreductase subunit K.